Reading from the N-terminus, the 679-residue chain is Translation initiation factor IF-2 (679 aa).

The tr-type G domain occupies 178–347; the sequence is KRPPIITVMG…LLTSEMQELK (170 aa). The G1 stretch occupies residues 187–194; that stretch reads GHVDHGKT. A GTP-binding site is contributed by 187 to 194; that stretch reads GHVDHGKT. Residues 212–216 form a G2 region; the sequence is GITQH. Residues 233–236 form a G3 region; the sequence is DTPG. GTP contacts are provided by residues 233-237 and 287-290; these read DTPGH and NKMD. A G4 region spans residues 287 to 290; that stretch reads NKMD. Positions 323–325 are G5; the sequence is SAK.

Belongs to the TRAFAC class translation factor GTPase superfamily. Classic translation factor GTPase family. IF-2 subfamily.

It is found in the cytoplasm. Its function is as follows. One of the essential components for the initiation of protein synthesis. Protects formylmethionyl-tRNA from spontaneous hydrolysis and promotes its binding to the 30S ribosomal subunits. Also involved in the hydrolysis of GTP during the formation of the 70S ribosomal complex. The sequence is that of Translation initiation factor IF-2 from Clostridium perfringens (strain ATCC 13124 / DSM 756 / JCM 1290 / NCIMB 6125 / NCTC 8237 / Type A).